The sequence spans 307 residues: tRNA dimethylallyltransferase (307 aa).

9–16 (GPTAVGKT) contacts ATP. Residue 11-16 (TAVGKT) participates in substrate binding. The segment at 34–37 (DSMQ) is interaction with substrate tRNA.

The protein belongs to the IPP transferase family. Monomer. It depends on Mg(2+) as a cofactor.

The catalysed reaction is adenosine(37) in tRNA + dimethylallyl diphosphate = N(6)-dimethylallyladenosine(37) in tRNA + diphosphate. Functionally, catalyzes the transfer of a dimethylallyl group onto the adenine at position 37 in tRNAs that read codons beginning with uridine, leading to the formation of N6-(dimethylallyl)adenosine (i(6)A). The polypeptide is tRNA dimethylallyltransferase (Limosilactobacillus reuteri (strain DSM 20016) (Lactobacillus reuteri)).